Consider the following 706-residue polypeptide: MGKDSQNYYGKHGTPQKYDPTFKGPIYNRGCTDVICCVLLFLAIVGYVAVGIIAWTHGDPRKVIYPTDSRGEFCGQKGTKNADKPFLFYFNIVKCANPLVLLEFHCPTPQICVKQCPDRYLTLLSARNTRDFDYYKQFCVPGFQNNKGVTEILRDGECPAVITPSKPLAQRCFPAIHASKGVLMVGNETTYEDGHGARKNITDLVEGAKKANKILEARQLAMQIFEDYTVSWYWIIIGLVIAMVLSLLFIVLLRFLAGIMVWVMIVMVILVLGYGIFHCYMEYSRLRGEAGSDVSLVDLGFQTDLRVYLHLRQTWMAFMIILSILEVVIILLLIFLRKRILIAIALIKEASRAVGHVMCSLLYPLVTFFLLCLCIAYWASTSVFLSTSNTAVYKVVDDTACPLLRKTCNPETFPLRNESLQCPTARCQFAFYGGESTYHRALLGLQIFNAFMFFWLANFVLALGQVTLAGAFASYYWAMRKPDDMPAFPLFSAFGRALRYHTGSLAFGSLILAIVQIIRVMLEYLDQRLKAAQNKFAKFLMVCLKCCFWCLEKFIKFLNRNAYIMIAIYGTNFCTSARNAFFLLMRNIIRVAVLDKVTDFLFLLGKLLIVGSVGILAFFFFTHRIRIVQDTAPPLNYYWVPILTVIIGSYLIAHGFFSVYGMCVDTLFLCFLEDLERNDGSAERPYFMSSTLKKLLNKTNKKVAES.

Topologically, residues 1–33 (MGKDSQNYYGKHGTPQKYDPTFKGPIYNRGCTD) are cytoplasmic. Thr-14 carries the phosphothreonine modification. The helical transmembrane segment at 34 to 54 (VICCVLLFLAIVGYVAVGIIA) threads the bilayer. Residues 55 to 232 (WTHGDPRKVI…QIFEDYTVSW (178 aa)) lie on the Extracellular side of the membrane. Asn-187 and Asn-200 each carry an N-linked (GlcNAc...) asparagine glycan. The chain crosses the membrane as a helical span at residues 233 to 253 (YWIIIGLVIAMVLSLLFIVLL). Residues 254 to 256 (RFL) are Cytoplasmic-facing. The chain crosses the membrane as a helical span at residues 257–277 (AGIMVWVMIVMVILVLGYGIF). Over 278–315 (HCYMEYSRLRGEAGSDVSLVDLGFQTDLRVYLHLRQTW) the chain is Extracellular. A helical transmembrane segment spans residues 316-336 (MAFMIILSILEVVIILLLIFL). Topologically, residues 337–364 (RKRILIAIALIKEASRAVGHVMCSLLYP) are cytoplasmic. A helical membrane pass occupies residues 365 to 385 (LVTFFLLCLCIAYWASTSVFL). The Extracellular segment spans residues 386 to 454 (STSNTAVYKV…LQIFNAFMFF (69 aa)). A glycan (N-linked (GlcNAc...) asparagine) is linked at Asn-417. A helical membrane pass occupies residues 455–477 (WLANFVLALGQVTLAGAFASYYW). Topologically, residues 478 to 504 (AMRKPDDMPAFPLFSAFGRALRYHTGS) are cytoplasmic. The chain crosses the membrane as a helical span at residues 505 to 525 (LAFGSLILAIVQIIRVMLEYL). Over 526-563 (DQRLKAAQNKFAKFLMVCLKCCFWCLEKFIKFLNRNAY) the chain is Extracellular. The helical transmembrane segment at 564-584 (IMIAIYGTNFCTSARNAFFLL) threads the bilayer. Residues 585–599 (MRNIIRVAVLDKVTD) lie on the Cytoplasmic side of the membrane. The chain crosses the membrane as a helical span at residues 600 to 620 (FLFLLGKLLIVGSVGILAFFF). The Extracellular portion of the chain corresponds to 621–638 (FTHRIRIVQDTAPPLNYY). A helical membrane pass occupies residues 639 to 659 (WVPILTVIIGSYLIAHGFFSV). The Cytoplasmic segment spans residues 660 to 706 (YGMCVDTLFLCFLEDLERNDGSAERPYFMSSTLKKLLNKTNKKVAES).

This sequence belongs to the CTL (choline transporter-like) family. In terms of assembly, interacts with COCH. Post-translationally, glycosylated, glycosylation differs from tissue to tissue. The molecular mass of the mature glycosylated protein is highest in kidney, followed by lung, colon and spleen, then brain and tongue. As to expression, expressed at high levels in lung, colon, inner ear and spleen (at protein level). Progressively lower levels in brain, tongue, liver and kidney (at protein level). In the kidney, prominent expression in glomeruli in the lining of Bowman's capsule and on the mesangial cells adjacent to the vessels within the glomerulus (at protein level). Strongly expressed on the membranes of splenocytes and in lung parenchyme (at protein level). Expressed at higher levels than isoform 2 in colon, heart, kidney, lung, cochlea, tongue and muscle, as well as in the inner ear. In terms of tissue distribution, predominantly expressed in brain, liver and spleen.

The protein localises to the cell membrane. The protein resides in the mitochondrion outer membrane. It carries out the reaction choline(out) + n H(+)(in) = choline(in) + n H(+)(out). The enzyme catalyses ethanolamine(out) + n H(+)(in) = ethanolamine(in) + n H(+)(out). Functionally, choline/H+ antiporter, mainly in mitochodria. Also acts as a low-affinity ethanolamine/H+ antiporter, regulating the supply of extracellular ethanolamine (Etn) for the CDP-Etn pathway, redistribute intracellular Etn and balance the CDP-Cho and CDP-Etn arms of the Kennedy pathway. The sequence is that of Choline transporter-like protein 2 (Slc44a2) from Mus musculus (Mouse).